The chain runs to 541 residues: Tyrosine-protein kinase Yes (541 aa).

G2 carries the N-myristoyl glycine lipid modification. The S-palmitoyl cysteine; in membrane form moiety is linked to residue C3. Phosphotyrosine is present on Y32. Residues 89 to 150 form the SH3 domain; it reads GGVTIFVALY…PSNYVVPADS (62 aa). One can recognise an SH2 domain in the interval 156–253; that stretch reads WYFGKMGRKD…GLCHKLTTVC (98 aa). The Protein kinase domain maps to 275–528; it reads LRLEVKLGQG…YIQSFLEDYF (254 aa). Residues 281–289 and K303 contribute to the ATP site; that span reads LGQGCFGEV. Phosphotyrosine occurs at positions 334 and 343. D394 (proton acceptor) is an active-site residue. A Phosphotyrosine; by autocatalysis modification is found at Y424. Y535 bears the Phosphotyrosine mark.

This sequence belongs to the protein kinase superfamily. Tyr protein kinase family. SRC subfamily. Interacts with YAP1. Interacts with FASLG. Interacts with CTNND1; this interaction allows YES1-mediated activation of FYN and FER and subsequent phosphorylation of CTNND1. Interacts with CSF1R. Interacts with IL6ST/gp130. Interacts with SCRIB, when YES1 is in a closed conformation; the interaction facilitates YES1 autophosphorylation. In terms of processing, phosphorylated. Phosphorylation by CSK on the C-terminal tail maintains the enzyme in an inactive state. Autophosphorylation at Tyr-424 maintains enzyme activity by blocking CSK-mediated inhibition. Palmitoylation at Cys-3 promotes membrane localization.

The protein resides in the cell membrane. Its subcellular location is the cytoplasm. The protein localises to the cytoskeleton. It localises to the microtubule organizing center. It is found in the centrosome. The protein resides in the cytosol. Its subcellular location is the cell junction. It catalyses the reaction L-tyrosyl-[protein] + ATP = O-phospho-L-tyrosyl-[protein] + ADP + H(+). Non-receptor protein tyrosine kinase that is involved in the regulation of cell growth and survival, apoptosis, cell-cell adhesion, cytoskeleton remodeling, and differentiation. Stimulation by receptor tyrosine kinases (RTKs) including EGFR, PDGFR, CSF1R and FGFR leads to recruitment of YES1 to the phosphorylated receptor, and activation and phosphorylation of downstream substrates. Upon EGFR activation, promotes the phosphorylation of PARD3 to favor epithelial tight junction assembly. Participates in the phosphorylation of specific junctional components such as CTNND1 by stimulating the FYN and FER tyrosine kinases at cell-cell contacts. Upon T-cell stimulation by CXCL12, phosphorylates collapsin response mediator protein 2/DPYSL2 and induces T-cell migration. Participates in CD95L/FASLG signaling pathway and mediates AKT-mediated cell migration. Plays a role in cell cycle progression by phosphorylating the cyclin dependent kinase 4/CDK4 thus regulating the G1 phase. Also involved in G2/M progression and cytokinesis. Catalyzes phosphorylation of organic cation transporter OCT2 which induces its transport activity. The protein is Tyrosine-protein kinase Yes (Yes1) of Mus musculus (Mouse).